A 228-amino-acid chain; its full sequence is Ribosomal RNA small subunit methyltransferase G (228 aa).

S-adenosyl-L-methionine contacts are provided by residues glycine 89, leucine 94, 140–141 (VE), and arginine 159.

This sequence belongs to the methyltransferase superfamily. RNA methyltransferase RsmG family.

The protein resides in the cytoplasm. The enzyme catalyses guanosine(527) in 16S rRNA + S-adenosyl-L-methionine = N(7)-methylguanosine(527) in 16S rRNA + S-adenosyl-L-homocysteine. Its function is as follows. Specifically methylates the N7 position of guanine in position 527 of 16S rRNA. The sequence is that of Ribosomal RNA small subunit methyltransferase G from Burkholderia vietnamiensis (strain G4 / LMG 22486) (Burkholderia cepacia (strain R1808)).